We begin with the raw amino-acid sequence, 890 residues long: MKFHEMGQTDLLEATNTSMKQGLTEKEVKKRLDKHGPNELQEGKKTSALLLFFAQFKDFMVLVLLAATLISGFLGEYVDAVAIIAIVFVNGILGFFQERRAEQSLQALKELSTPHVMALREGSWTKIPSKELVPGDIVKFTSGDRIGADVRIVEARSLEIEESALTGESIPVVKHADKLKKPDVSLGDITNMAFMGTIVTRGSGVGVVVGTGMNTAMGKIADMLESAGTLSTPLQRRLEQLGKILIVVALLLTVLVVAVGVIQGHDLYSMFLAGVSLAVAAIPEGLPAIVTVALSLGVQRMIKQKSIVRKLPAVETLGCASIICSDKTGTMTQNKMTVTHVWSGGKTWRVAGAGYEPKGSFTLNEKEISVNEHKPLQQMLLFGALCNNSNIEKRDGEYVLDGDPTEGALLTAARKGGFSKEFVESNYRVIEEFPFDSARKMMTVIVENQDRKRYIITKGAPDVLMQRSSRIYYDGSAALFSNERKAETEAVLRHLASQALRTIAVAYRPIKAGETPSMEQAEKDLTMLGLSGIIDPPRPEVRQAIKECREAGIKTVMITGDHVETAKAIAKDLRLLPKSGKIMDGKMLNELSQEELSHVVEDVYVFARVSPEHKLKIVKAYQENGHIVAMTGDGVNDAPAIKQADIGVSMGITGTDVAKEASSLVLVDDNFATIKSAIKEGRNIYENIRKFIRYLLASNVGEILVMLFAMLLALPLPLVPIQILWVNLVTDGLPAMALGMDQPEGDVMKRKPRHPKEGVFARKLGWKVVSRGFLIGVATILAFIIVYHRNPENLAYAQTIAFATLVLAQLIHVFDCRSETSVFSRNPFQNLYLIGAVLSSILLMLVVIYYPPLQPIFHTVAITPGDWMLVIGMSAIPTFLLAGSLLTRKK.

At 1–47 (MKFHEMGQTDLLEATNTSMKQGLTEKEVKKRLDKHGPNELQEGKKTS) the chain is on the cytoplasmic side. A helical membrane pass occupies residues 48-68 (ALLLFFAQFKDFMVLVLLAAT). Residues 69–78 (LISGFLGEYV) are Extracellular-facing. Residues 79–99 (DAVAIIAIVFVNGILGFFQER) traverse the membrane as a helical segment. Topologically, residues 100-238 (RAEQSLQALK…TLSTPLQRRL (139 aa)) are cytoplasmic. The helical transmembrane segment at 239–258 (EQLGKILIVVALLLTVLVVA) threads the bilayer. The Extracellular portion of the chain corresponds to 259–270 (VGVIQGHDLYSM). Residues 271-288 (FLAGVSLAVAAIPEGLPA) traverse the membrane as a helical segment. 4 residues coordinate Ca(2+): Val279, Ala280, Ile282, and Glu284. Topologically, residues 289 to 688 (IVTVALSLGV…KEGRNIYENI (400 aa)) are cytoplasmic. The 4-aspartylphosphate intermediate role is filled by Asp326. The Mg(2+) site is built by Asp633 and Asp637. Residues 689 to 708 (RKFIRYLLASNVGEILVMLF) traverse the membrane as a helical segment. Ca(2+) contacts are provided by Asn699 and Glu702. At 709-718 (AMLLALPLPL) the chain is on the extracellular side. A helical transmembrane segment spans residues 719-739 (VPIQILWVNLVTDGLPAMALG). Ca(2+) contacts are provided by Asn727, Thr730, and Asp731. At 740 to 759 (MDQPEGDVMKRKPRHPKEGV) the chain is on the cytoplasmic side. Residues 760 to 782 (FARKLGWKVVSRGFLIGVATILA) form a helical membrane-spanning segment. Over 783-798 (FIIVYHRNPENLAYAQ) the chain is Extracellular. Residues 799–818 (TIAFATLVLAQLIHVFDCRS) form a helical membrane-spanning segment. Topologically, residues 819 to 830 (ETSVFSRNPFQN) are cytoplasmic. A helical membrane pass occupies residues 831–849 (LYLIGAVLSSILLMLVVIY). Topologically, residues 850–864 (YPPLQPIFHTVAITP) are extracellular. A helical membrane pass occupies residues 865 to 885 (GDWMLVIGMSAIPTFLLAGSL). The Cytoplasmic portion of the chain corresponds to 886–890 (LTRKK).

This sequence belongs to the cation transport ATPase (P-type) (TC 3.A.3) family. Type IIA subfamily. In terms of processing, phosphorylated in a Ca(2+)-dependent manner starting 4 hours after shifting to sporulation medium.

The protein resides in the cell membrane. The catalysed reaction is Ca(2+)(in) + ATP + H2O = Ca(2+)(out) + ADP + phosphate + H(+). This magnesium-dependent enzyme catalyzes the hydrolysis of ATP coupled with the transport of calcium. The protein is Calcium-transporting ATPase (yloB) of Bacillus subtilis (strain 168).